The following is a 220-amino-acid chain: 3-dehydroquinate dehydratase (220 aa).

Residues 29–31 (EFR) and Arg56 each bind 3-dehydroquinate. Residue His116 is the Proton donor/acceptor of the active site. The active-site Schiff-base intermediate with substrate is the Lys142. Residues Arg180, Ser200, and Gln204 each contribute to the 3-dehydroquinate site.

This sequence belongs to the type-I 3-dehydroquinase family. In terms of assembly, homodimer.

The enzyme catalyses 3-dehydroquinate = 3-dehydroshikimate + H2O. Its pathway is metabolic intermediate biosynthesis; chorismate biosynthesis; chorismate from D-erythrose 4-phosphate and phosphoenolpyruvate: step 3/7. Its function is as follows. Involved in the third step of the chorismate pathway, which leads to the biosynthesis of aromatic amino acids. Catalyzes the cis-dehydration of 3-dehydroquinate (DHQ) and introduces the first double bond of the aromatic ring to yield 3-dehydroshikimate. In Methanocaldococcus jannaschii (strain ATCC 43067 / DSM 2661 / JAL-1 / JCM 10045 / NBRC 100440) (Methanococcus jannaschii), this protein is 3-dehydroquinate dehydratase.